The chain runs to 278 residues: Pre-hexon-linking protein VIII (278 aa).

A propeptide spanning residues 114 to 199 (SPSLLSGGAS…ILRYRRLGQQ (86 aa)) is cleaved from the precursor.

Belongs to the adenoviridae hexon-linking protein family. As to quaternary structure, interacts with the peripentonal hexons as well as the hexons in the facets. Part of a complex composed of the core-capsid bridging protein, the endosome lysis protein VI and the hexon-linking protein VIII; these interactions bridge the virus core to the capsid. Cleaved by the viral protease during virion maturation. May cause the middle segment to be shed from the capsid.

Its subcellular location is the virion. It is found in the host nucleus. In terms of biological role, structural component of the virion that acts as a cement protein on the capsid interior and which glue the peripentonal hexons and group-of-nine hexons together. This is Pre-hexon-linking protein VIII from Pantherophis guttatus (Corn snake).